Reading from the N-terminus, the 160-residue chain is MSSRRDAREQVMKTLYANEQTDGDAEQALHALVRVPLDEDPSTRDFAEHLFRETLKTMEEADEIIEKHADNWEIHRIAAIDRSLLRMATTELLKFEEVPPKVSVDEAIEIAKRYSTPRSGTFVNGVIDAILLDLHDQGRLNKTGRGLIGMDTIQERAGSS.

It belongs to the NusB family.

Involved in transcription antitermination. Required for transcription of ribosomal RNA (rRNA) genes. Binds specifically to the boxA antiterminator sequence of the ribosomal RNA (rrn) operons. The sequence is that of Transcription antitermination protein NusB from Salinibacter ruber (strain DSM 13855 / M31).